The chain runs to 358 residues: MAILIKNKVPTTLYQVYDNEGKLMDPNHKITLSNEQLKHAFYLMNLSRIMDKKMLVWQRAGKMLNFAPNLGEEALQVGMGMGLNENDWFCPTFRSGALMLYRGVKPEQLLLYWNGNENGSKIEAKYKTLPINITIGAQYSHAAGLGYMLHYKKLPNVAVTMIGDGGTAEGEFYEAMNIASIHKWNSVFCINNNQFAISTRTKLESAVSDLSTKAIAVNIPRIRVDGNDLIASYEAMHEAANYARSGNGPVLIEFFSWRQGPHTTSDDPSIYRTKEEEAEAMKSDPVKRLRNFLFDRGILTPQQEEEMVAKIEQEVQAAYEVMVSKTPVTLDEVFDYNYEKLTPDLARQKAEAKKYFKD.

Heterodimer of an alpha and a beta chain. Requires thiamine diphosphate as cofactor.

The enzyme catalyses N(6)-[(R)-lipoyl]-L-lysyl-[protein] + pyruvate + H(+) = N(6)-[(R)-S(8)-acetyldihydrolipoyl]-L-lysyl-[protein] + CO2. Functionally, the pyruvate dehydrogenase complex catalyzes the overall conversion of pyruvate to acetyl-CoA and CO(2). It contains multiple copies of three enzymatic components: pyruvate dehydrogenase (E1), dihydrolipoamide acetyltransferase (E2) and lipoamide dehydrogenase (E3). The sequence is that of Pyruvate dehydrogenase E1 component subunit alpha (pdhA) from Mycoplasma pneumoniae (strain ATCC 29342 / M129 / Subtype 1) (Mycoplasmoides pneumoniae).